The sequence spans 83 residues: Exodeoxyribonuclease 7 small subunit (83 aa).

The protein belongs to the XseB family. In terms of assembly, heterooligomer composed of large and small subunits.

Its subcellular location is the cytoplasm. It catalyses the reaction Exonucleolytic cleavage in either 5'- to 3'- or 3'- to 5'-direction to yield nucleoside 5'-phosphates.. Functionally, bidirectionally degrades single-stranded DNA into large acid-insoluble oligonucleotides, which are then degraded further into small acid-soluble oligonucleotides. This Aeromonas salmonicida (strain A449) protein is Exodeoxyribonuclease 7 small subunit.